The primary structure comprises 63 residues: Megourin-3 (63 aa).

As to quaternary structure, monomer. Contains four disulfide bonds.

It is found in the secreted. Has antimicrobial activity against Gram-positive bacteria and fungi. The protein is Megourin-3 of Megoura viciae (Vetch aphid).